The chain runs to 322 residues: HPr kinase/phosphorylase (322 aa).

Active-site residues include H146 and K167. ATP is bound at residue 161–168; that stretch reads GDSGLGKS. S168 lines the Mg(2+) pocket. The active-site Proton acceptor; for phosphorylation activity. Proton donor; for dephosphorylation activity is the D185. The tract at residues 209–218 is important for the catalytic mechanism of both phosphorylation and dephosphorylation; it reads LEVRGLGLLD. A Mg(2+)-binding site is contributed by E210. R250 is a catalytic residue. Residues 271–276 are important for the catalytic mechanism of dephosphorylation; sequence QVAAGR.

The protein belongs to the HPrK/P family. In terms of assembly, homohexamer. Mg(2+) serves as cofactor.

It catalyses the reaction [HPr protein]-L-serine + ATP = [HPr protein]-O-phospho-L-serine + ADP + H(+). The enzyme catalyses [HPr protein]-O-phospho-L-serine + phosphate + H(+) = [HPr protein]-L-serine + diphosphate. Catalyzes the ATP- as well as the pyrophosphate-dependent phosphorylation of a specific serine residue in HPr, a phosphocarrier protein of the phosphoenolpyruvate-dependent sugar phosphotransferase system (PTS). HprK/P also catalyzes the pyrophosphate-producing, inorganic phosphate-dependent dephosphorylation (phosphorolysis) of seryl-phosphorylated HPr (P-Ser-HPr). This chain is HPr kinase/phosphorylase, found in Burkholderia cenocepacia (strain HI2424).